We begin with the raw amino-acid sequence, 201 residues long: Large ribosomal subunit protein uL4 (201 aa).

Residues 39 to 72 (KRQGTSAQKSRSEVIGSGKKPWRQKGTGRARAGS) are disordered.

Belongs to the universal ribosomal protein uL4 family. Part of the 50S ribosomal subunit.

Its function is as follows. One of the primary rRNA binding proteins, this protein initially binds near the 5'-end of the 23S rRNA. It is important during the early stages of 50S assembly. It makes multiple contacts with different domains of the 23S rRNA in the assembled 50S subunit and ribosome. Forms part of the polypeptide exit tunnel. The protein is Large ribosomal subunit protein uL4 of Wigglesworthia glossinidia brevipalpis.